The following is a 356-amino-acid chain: Retinoic acid-induced protein 3 (356 aa).

Residues 1–35 (MTTPTTAPSGCRSDLDSRYHRLCDLAEGWGIALET) are Extracellular-facing. The chain crosses the membrane as a helical span at residues 36–56 (LAAVGAVATVACMFALVFLIC). The Cytoplasmic portion of the chain corresponds to 57–68 (KVQDSNKRKMLP). The chain crosses the membrane as a helical span at residues 69–89 (AQFLFLLGVLGVFGLTFAFII). Over 90-101 (KLDGATGPTRFF) the chain is Extracellular. The chain crosses the membrane as a helical span at residues 102-122 (LFGVLFAICFSCLLAHAFNLI). Over 123-131 (KLVRGRKPL) the chain is Cytoplasmic. Residues 132-152 (SWLVILSLAVGFSLVQDVIAI) traverse the membrane as a helical segment. Residues 153-178 (EYLVLTMNRTNVNVFSELPAPRRNED) lie on the Extracellular side of the membrane. Asn-160 is a glycosylation site (N-linked (GlcNAc...) asparagine). A helical membrane pass occupies residues 179–199 (FVMLLIYVLVLMVLTFFTSFL). Over 200–214 (VFCGSFSGWKRHGFH) the chain is Cytoplasmic. A helical transmembrane segment spans residues 215-235 (ICFTSFLSIAIWVAWIVLLLI). Topologically, residues 236 to 244 (PDIDRKWDD) are extracellular. A helical transmembrane segment spans residues 245 to 265 (TILSTALVANGWVFLAFYILP). The Cytoplasmic segment spans residues 266-356 (EFRQLPRQRS…NDYEGRKGDS (91 aa)). Residue Ser-303 is modified to Phosphoserine. 2 positions are modified to phosphotyrosine: Tyr-318 and Tyr-321. The interval 336–356 (IPRAQAPASPYNDYEGRKGDS) is disordered. Residue Ser-344 is modified to Phosphoserine. Phosphotyrosine is present on residues Tyr-346 and Tyr-349.

Belongs to the G-protein coupled receptor 3 family. As to quaternary structure, interacts (via its transmembrane domain) with EGFR. Post-translationally, phosphorylated in two conserved double-tyrosine motifs, Tyr 318/Tyr-321 and Tyr-346/Tyr-349 by EGFR. Tyr-318 and Tyr-321 are the preferred residues responsible for EGFR-mediated GPRC5A phosphorylation. As to expression, expressed predominantly in normal fetal and adult lung. Almost undetectable or expressed at very low levels in other tissues.

The protein resides in the cell membrane. Functionally, orphan receptor. Could be involved in modulating differentiation and maintaining homeostasis of epithelial cells. This retinoic acid-inducible GPCR provides evidence for a possible interaction between retinoid and G-protein signaling pathways. Functions as a negative modulator of EGFR signaling. Acts as a lung tumor suppressor. The sequence is that of Retinoic acid-induced protein 3 (Gprc5a) from Mus musculus (Mouse).